A 308-amino-acid polypeptide reads, in one-letter code: Ribonuclease HIII (308 aa).

The 217-residue stretch at 88-304 folds into the RNase H type-2 domain; sequence FHCIGSDEAG…RDKAIHLINQ (217 aa). A divalent metal cation is bound by residues D94, E95, and D199.

It belongs to the RNase HII family. RnhC subfamily. Requires Mn(2+) as cofactor. It depends on Mg(2+) as a cofactor.

It localises to the cytoplasm. It carries out the reaction Endonucleolytic cleavage to 5'-phosphomonoester.. Its function is as follows. Endonuclease that specifically degrades the RNA of RNA-DNA hybrids. This Staphylococcus epidermidis (strain ATCC 35984 / DSM 28319 / BCRC 17069 / CCUG 31568 / BM 3577 / RP62A) protein is Ribonuclease HIII.